A 1716-amino-acid polypeptide reads, in one-letter code: DNA-directed RNA polymerase I subunit RPA1 (1716 aa).

Cys64, Cys67, Cys74, His77, Cys104, and Cys107 together coordinate Zn(2+). Residues Leu110–Ala201 are clamp. Residues Cys205 and Cys208 each contribute to the Zn(2+) site. The clamp stretch occupies residues Phe327–Gly433. The interval Asp410–Gly423 is rudder. Residues Lys431, Arg436, and Arg443 each coordinate DNA. The tract at residues Tyr475 to Val549 is involved in RRN3 binding to Pol I complex. Arg559 contributes to the RNA binding site. 3 residues coordinate Mg(2+): Asp595, Asp597, and Asp599. Asp599 contributes to the RNA binding site. The interval Lys812 to Phe890 is funnel. The segment at Arg967–Ile1008 is bridging helix. A mediates the interaction with TOP2A region spans residues Ala1067–His1162. Residues Pro1214 to Leu1255 are trigger loop. Arg1256 lines the DNA pocket. The interval Ala1368–Ala1493 is disordered. The span at Thr1380 to Glu1397 shows a compositional bias: basic and acidic residues. Acidic residues-rich tracts occupy residues Glu1398–Ala1419 and Glu1429–Glu1451. A compositionally biased stretch (basic and acidic residues) spans Glu1452–Glu1464. Positions Pro1465–Ser1477 are enriched in acidic residues.

Belongs to the RNA polymerase beta' chain family. As to quaternary structure, component of the RNA polymerase I (Pol I) complex consisting of 13 subunits: a ten-subunit catalytic core composed of POLR1A/RPA1, POLR1B/RPA2, POLR1C/RPAC1, POLR1D/RPAC2, POLR1H/RPA12, POLR2E/RPABC1, POLR2F/RPABC2, POLR2H/RPABC3, POLR2K/RPABC4 and POLR2L/RPABC5; a mobile stalk subunit POLR1F/RPA43 protruding from the core and additional subunits homologous to general transcription factors POLR1E/RPA49 and POLR1G/RPA34. Part of Pol I pre-initiation complex (PIC), in which Pol I core assembles with RRN3 and promoter-bound UTBF and SL1/TIF-IB complex. Interacts (via dock II domain) with TOP2A; this interaction may assist Pol I transcription initiation by releasing supercoils occurring during DNA unwinding. Interacts with CAVIN1; this interaction induces the dissociation of Pol I complex paused at rDNA terminator sequences. Interacts with MYO1C. Interacts with ERBB2. Interacts with DDX11. Interacts with RECQL5. The cofactor is Mg(2+). In terms of processing, phosphorylated.

Its subcellular location is the nucleus. The protein localises to the nucleolus. The protein resides in the chromosome. It carries out the reaction RNA(n) + a ribonucleoside 5'-triphosphate = RNA(n+1) + diphosphate. Catalytic core component of RNA polymerase I (Pol I), a DNA-dependent RNA polymerase which synthesizes ribosomal RNA precursors using the four ribonucleoside triphosphates as substrates. Transcribes 47S pre-rRNAs from multicopy rRNA gene clusters, giving rise to 5.8S, 18S and 28S ribosomal RNAs. Pol I-mediated transcription cycle proceeds through transcription initiation, transcription elongation and transcription termination stages. During transcription initiation, Pol I pre-initiation complex (PIC) is recruited by the selectivity factor 1 (SL1/TIF-IB) complex bound to the core promoter that precedes an rDNA repeat unit. The PIC assembly bends the promoter favoring the formation of the transcription bubble and promoter escape. Once the polymerase has escaped from the promoter it enters the elongation phase during which RNA is actively polymerized, based on complementarity with the template DNA strand. Highly processive, assembles in structures referred to as 'Miller trees' where many elongating Pol I complexes queue and transcribe the same rDNA coding regions. At terminator sequences downstream of the rDNA gene, PTRF interacts with Pol I and halts Pol I transcription leading to the release of the RNA transcript and polymerase from the DNA. Forms Pol I active center together with the second largest subunit POLR1B/RPA2. Appends one nucleotide at a time to the 3' end of the nascent RNA, with POLR1A/RPA1 contributing a Mg(2+)-coordinating DxDGD motif, and POLR1B/RPA2 participating in the coordination of a second Mg(2+) ion and providing lysine residues believed to facilitate Watson-Crick base pairing between the incoming nucleotide and the template base. Typically, Mg(2+) ions direct a 5' nucleoside triphosphate to form a phosphodiester bond with the 3' hydroxyl of the preceding nucleotide of the nascent RNA, with the elimination of pyrophosphate. Has proofreading activity: Pauses and backtracks to allow the cleavage of a missincorporated nucleotide via POLR1H/RPA12. High Pol I processivity is associated with decreased transcription fidelity. In Rattus norvegicus (Rat), this protein is DNA-directed RNA polymerase I subunit RPA1.